We begin with the raw amino-acid sequence, 129 residues long: Ribosome-binding factor A (129 aa).

The protein belongs to the RbfA family. In terms of assembly, monomer. Binds 30S ribosomal subunits, but not 50S ribosomal subunits or 70S ribosomes.

It localises to the cytoplasm. One of several proteins that assist in the late maturation steps of the functional core of the 30S ribosomal subunit. Associates with free 30S ribosomal subunits (but not with 30S subunits that are part of 70S ribosomes or polysomes). Required for efficient processing of 16S rRNA. May interact with the 5'-terminal helix region of 16S rRNA. The protein is Ribosome-binding factor A of Pseudomonas aeruginosa (strain UCBPP-PA14).